The sequence spans 371 residues: Transmembrane protein 229A (371 aa).

Residues 1–30 (MAGSDVASEGPSPRDGATRRPGATGGLRSQ) form a disordered region. 6 helical membrane passes run 51 to 71 (LPAW…DVLV), 117 to 137 (AFLF…TLAG), 235 to 255 (FLFF…FFNV), 269 to 289 (LWSF…YFHL), 301 to 321 (VPIY…GLRM), and 334 to 354 (LNFM…LSVY).

The protein belongs to the TMEM229 family.

The protein localises to the membrane. The chain is Transmembrane protein 229A (Tmem229a) from Mus musculus (Mouse).